A 261-amino-acid polypeptide reads, in one-letter code: Carbonic anhydrase 1 (261 aa).

Alanine 2 is modified (N-acetylalanine). One can recognise an Alpha-carbonic anhydrase domain in the interval 4-261 (ADWGYGSENG…LKGRTVRASF (258 aa)). Residue histidine 65 is the Proton donor/acceptor of the active site. Residues histidine 95, histidine 97, and histidine 120 each coordinate Zn(2+). Residues threonine 200 and 200 to 201 (TH) each bind substrate. Positions 239 to 261 (AVPVLSNHRPPQPLKGRTVRASF) are disordered.

It belongs to the alpha-carbonic anhydrase family. It depends on Zn(2+) as a cofactor.

The protein localises to the cytoplasm. The enzyme catalyses hydrogencarbonate + H(+) = CO2 + H2O. The catalysed reaction is urea = cyanamide + H2O. With respect to regulation, inhibited by acetazolamide. Its function is as follows. Catalyzes the reversible hydration of carbon dioxide. Can hydrate cyanamide to urea. In Mus musculus (Mouse), this protein is Carbonic anhydrase 1 (Ca1).